The chain runs to 180 residues: p-cumate 2,3-dioxygenase system, small oxygenase component (180 aa).

It belongs to the bacterial ring-hydroxylating dioxygenase beta subunit family. In terms of assembly, the p-cumate 2,3-dioxygenase multicomponent enzyme system is composed of an electron transfer component and a dioxygenase component (iron sulfur protein (ISP)). The electron transfer component is composed of a ferredoxin reductase (CmtAa) and a ferredoxin (CmtAd), and the dioxygenase component is formed of a large alpha subunit (CmtAb) and a small beta subunit (CmtAc).

The protein operates within aromatic compound metabolism; p-cumate degradation; acetaldehyde and pyruvate from p-cumate. Its function is as follows. Component of the p-cumate 2,3-dioxygenase multicomponent enzyme system which catalyzes the incorporation of both atoms of molecular oxygen into p-cumate to form cis-2,3-dihydroxy-2,3-dihydro-p-cumate. The beta subunit seems to have a structural role in the holoenzyme. Also able to catalyze the cis-dihydroxylation of indole-2-carboxylate and indole-3-carboxylate. In Pseudomonas putida (Arthrobacter siderocapsulatus), this protein is p-cumate 2,3-dioxygenase system, small oxygenase component.